The sequence spans 171 residues: ATP synthase subunit b (171 aa).

The chain crosses the membrane as a helical span at residues 24 to 44; sequence INLVIVIGVLYWFLKGFLGGI.

This sequence belongs to the ATPase B chain family. As to quaternary structure, F-type ATPases have 2 components, F(1) - the catalytic core - and F(0) - the membrane proton channel. F(1) has five subunits: alpha(3), beta(3), gamma(1), delta(1), epsilon(1). F(0) has four main subunits: a(1), b(1), b'(1) and c(10-14). The alpha and beta chains form an alternating ring which encloses part of the gamma chain. F(1) is attached to F(0) by a central stalk formed by the gamma and epsilon chains, while a peripheral stalk is formed by the delta, b and b' chains.

The protein localises to the cellular thylakoid membrane. Its function is as follows. F(1)F(0) ATP synthase produces ATP from ADP in the presence of a proton or sodium gradient. F-type ATPases consist of two structural domains, F(1) containing the extramembraneous catalytic core and F(0) containing the membrane proton channel, linked together by a central stalk and a peripheral stalk. During catalysis, ATP synthesis in the catalytic domain of F(1) is coupled via a rotary mechanism of the central stalk subunits to proton translocation. Component of the F(0) channel, it forms part of the peripheral stalk, linking F(1) to F(0). This Synechococcus sp. (strain WH7803) protein is ATP synthase subunit b.